Here is a 236-residue protein sequence, read N- to C-terminus: MGQKINPIGLRLGVNRTWDSRWYADSGEYGRLLHEDLKIRLYVLEELKQAAVSKIVIERPHKKCRVTIYSARPGLIIGKKGADIEKLRRKLSEMTNAETSLNIVEIHKPEIDATIIAQSIAQQLERRVAFRRAMKRAVQSALRLGAEGIRINCSGRLGGAEIARMEWYREGRVPLHTLRSDVDYGTAEAKTAYGICGVKVWVFKGEILEYDPMASERRAAEVDHSGSSSNRRRENA.

Positions 39–107 (IRLYVLEELK…ETSLNIVEIH (69 aa)) constitute a KH type-2 domain. The segment at 216–236 (ERRAAEVDHSGSSSNRRRENA) is disordered.

This sequence belongs to the universal ribosomal protein uS3 family. Part of the 30S ribosomal subunit. Forms a tight complex with proteins S10 and S14.

Its function is as follows. Binds the lower part of the 30S subunit head. Binds mRNA in the 70S ribosome, positioning it for translation. In Bartonella henselae (strain ATCC 49882 / DSM 28221 / CCUG 30454 / Houston 1) (Rochalimaea henselae), this protein is Small ribosomal subunit protein uS3.